The following is a 783-amino-acid chain: Ras and Rab interactor 1 (783 aa).

The residue at position 1 (Met1) is an N-acetylmethionine. The tract at residues 1–53 (MESPGESGAGSPGAPSPSSFTTGHLAREKPAQDPLYDVPNASGGQAGGPQRPG) is disordered. Phosphoserine is present on residues Ser3 and Ser16. Phosphotyrosine; by ABL1 and ABL2 is present on Tyr36. One can recognise an SH2 domain in the interval 69 to 163 (WLQLQANAAA…ILLLPLQLPR (95 aa)). Phosphoserine is present on residues Ser210, Ser258, Ser333, and Ser337. Disordered stretches follow at residues 250-282 (STETSSPLSPPAVPPPPVPVLPGAVPSQTERLP) and 295-342 (YRVP…HLGR). A compositionally biased stretch (pro residues) spans 257 to 269 (LSPPAVPPPPVPV). The tract at residues 294–727 (GYRVPAGSGP…GSGQSEARSR (434 aa)) is ras and 14-3-3 protein binding region. Over residues 317–334 (GSPSSSEEEGVPGSRGSP) the composition is skewed to low complexity. At Ser351 the chain carries Phosphoserine; by PKD/PRKD1. Positions 456–598 (LAADGSLGRL…LSGLGQAHTL (143 aa)) constitute a VPS9 domain. Ser609 and Ser611 each carry phosphoserine. Residues 624–706 (FQHLLRVAYQ…GYLVYRRAEW (83 aa)) enclose the Ras-associating domain. Omega-N-methylarginine is present on Arg692. The interval 709–783 (TQGAVTEEEG…EAEGSRAAEE (75 aa)) is disordered. Residues 762–772 (QAQEGPAQPGE) are compositionally biased toward low complexity.

The protein belongs to the RIN (Ras interaction/interference) family. Interacts with the GTP-bound form of Ras proteins (NRAS, HRAS and KRAS). This interaction prevents the association between RAF1 and Ras. Interacts with 14-3-3 proteins YWHAB, YWHAE and YWHAZ when phosphorylated on Ser-351. Interacts with the SH3 domain of ABL1 and ABL2. Interacts with RAB5A. The interaction with Ras is probably regulated and antagonized by the interaction with 14-3-3 proteins. The interaction with 14-3-3 proteins is regulated by phosphorylation on Ser-351. Post-translationally, phosphorylated on tyrosine residues by ABL1 and ABL2. Phosphorylation at Ser-351 by PRKD1 induces interaction with 14-3-3 proteins. In terms of tissue distribution, expressed in all tissues examined with high levels in brain, placenta and pancreas.

The protein localises to the cytoplasm. Its subcellular location is the membrane. It localises to the cytoskeleton. In terms of biological role, ras effector protein, which may serve as an inhibitory modulator of neuronal plasticity in aversive memory formation. Can affect Ras signaling at different levels. First, by competing with RAF1 protein for binding to activated Ras. Second, by enhancing signaling from ABL1 and ABL2, which regulate cytoskeletal remodeling. Third, by activating RAB5A, possibly by functioning as a guanine nucleotide exchange factor (GEF) for RAB5A, by exchanging bound GDP for free GTP, and facilitating Ras-activated receptor endocytosis. The polypeptide is Ras and Rab interactor 1 (RIN1) (Homo sapiens (Human)).